A 67-amino-acid chain; its full sequence is Conotoxin mr3d (67 aa).

Residues 1 to 19 form the signal peptide; it reads MSKLGILLTICLLLFPLTA. Positions 20 to 52 are excised as a propeptide; it reads VPLDGDQPADRPAERMQDDISSEHHPFFDPVKR. Disulfide bonds link Cys-53–Cys-65, Cys-54–Cys-62, and Cys-58–Cys-66. A 4-hydroxyproline; partial modification is found at Pro-64. At Cys-66 the chain carries Cysteine amide; partial.

It belongs to the conotoxin M superfamily. Post-translationally, has been found to be hydroxylated and amidated by Han et al. (2006), and to be unmodified by Ju et al. (2022). As to expression, expressed by the venom duct.

Its subcellular location is the secreted. The sequence is that of Conotoxin mr3d from Conus marmoreus (Marble cone).